A 57-amino-acid chain; its full sequence is Zinc finger protein MJ0458.1 (57 aa).

4 consecutive short sequence motifs (c(P)XCG motif) follow at residues 8 to 12, 26 to 30, 37 to 41, and 49 to 53; these read CISCN, CPNCG, CERCR, and CPKCG. Zn(2+) is bound by residues Cys-26 and Cys-29. Positions 49 and 52 each coordinate Zn(2+).

As to quaternary structure, monomer in solution.

Functionally, zinc-binding protein that binds only one zinc ion. The protein is Zinc finger protein MJ0458.1 of Methanocaldococcus jannaschii (strain ATCC 43067 / DSM 2661 / JAL-1 / JCM 10045 / NBRC 100440) (Methanococcus jannaschii).